The chain runs to 701 residues: Polyribonucleotide nucleotidyltransferase (701 aa).

Aspartate 487 and aspartate 493 together coordinate Mg(2+). Positions 554–613 (PTMIAMKIDTDKIRDVIGKGGATIRAICEETKASIDIEDDGSIKIFGETKEAADAAKQRI) constitute a KH domain. Residues 623–691 (GKIYVGKVER…NRGRIKLSIK (69 aa)) enclose the S1 motif domain.

The protein belongs to the polyribonucleotide nucleotidyltransferase family. As to quaternary structure, component of the RNA degradosome, which is a multiprotein complex involved in RNA processing and mRNA degradation. Requires Mg(2+) as cofactor.

The protein localises to the cytoplasm. The catalysed reaction is RNA(n+1) + phosphate = RNA(n) + a ribonucleoside 5'-diphosphate. Functionally, involved in mRNA degradation. Catalyzes the phosphorolysis of single-stranded polyribonucleotides processively in the 3'- to 5'-direction. This Pseudomonas putida (strain ATCC 47054 / DSM 6125 / CFBP 8728 / NCIMB 11950 / KT2440) protein is Polyribonucleotide nucleotidyltransferase.